We begin with the raw amino-acid sequence, 283 residues long: Gap junction beta-1 protein (283 aa).

The Cytoplasmic segment spans residues 1 to 22 (MNWTGLYTLLSGVNRHSTAIGR). Residues 23-45 (VWLSVIFIFRIMVLVVAAESVWG) traverse the membrane as a helical segment. Residues 46–75 (DEKSSFICNTLQPGCNSVCYDQFFPISHVR) are Extracellular-facing. Residues 76-95 (LWSLQLILVSTPALLVAMHV) form a helical membrane-spanning segment. The Cytoplasmic portion of the chain corresponds to 96-130 (AHQQHIEKKMLRLEGHGDPLHLEEVKRHKVHISGT). A helical membrane pass occupies residues 131–153 (LWWAYVISVVFRLLFEAVFMYVF). Residues 154 to 191 (YLLYPGYAMVRLVKCDVYPCPNTVDCFVSRPTEKTVFT) lie on the Extracellular side of the membrane. Residues 192–214 (VFMLAASGICIILNVAEVVYLII) traverse the membrane as a helical segment. Residues 215–283 (RACARRAQRR…AEKSDRCSAC (69 aa)) are Cytoplasmic-facing. Ser233, Ser258, Ser266, and Ser277 each carry phosphoserine.

It belongs to the connexin family. Beta-type (group I) subfamily. In terms of assembly, a connexon is composed of a hexamer of connexins. Interacts with CNST.

The protein resides in the cell membrane. The protein localises to the cell junction. It is found in the gap junction. One gap junction consists of a cluster of closely packed pairs of transmembrane channels, the connexons, through which materials of low MW diffuse from one cell to a neighboring cell. This Macaca fascicularis (Crab-eating macaque) protein is Gap junction beta-1 protein (GJB1).